A 153-amino-acid chain; its full sequence is Protein DpnD (153 aa).

This Streptococcus pneumoniae serotype 4 (strain ATCC BAA-334 / TIGR4) protein is Protein DpnD.